The following is a 33-amino-acid chain: Cytochrome b6-f complex subunit 8 (33 aa).

A helical transmembrane segment spans residues 2-22; sequence LFTVAWASLAAMFSFSIAMVV.

This sequence belongs to the PetN family. In terms of assembly, the 4 large subunits of the cytochrome b6-f complex are cytochrome b6, subunit IV (17 kDa polypeptide, PetD), cytochrome f and the Rieske protein, while the 4 small subunits are PetG, PetL, PetM and PetN. The complex functions as a dimer.

Its subcellular location is the cellular thylakoid membrane. Component of the cytochrome b6-f complex, which mediates electron transfer between photosystem II (PSII) and photosystem I (PSI), cyclic electron flow around PSI, and state transitions. In Synechococcus sp. (strain CC9902), this protein is Cytochrome b6-f complex subunit 8.